The sequence spans 334 residues: 6-phosphogluconolactonase (334 aa).

Belongs to the cycloisomerase 2 family.

The enzyme catalyses 6-phospho-D-glucono-1,5-lactone + H2O = 6-phospho-D-gluconate + H(+). It functions in the pathway carbohydrate degradation; pentose phosphate pathway; D-ribulose 5-phosphate from D-glucose 6-phosphate (oxidative stage): step 2/3. Catalyzes the hydrolysis of 6-phosphogluconolactone to 6-phosphogluconate. The protein is 6-phosphogluconolactonase of Buchnera aphidicola subsp. Acyrthosiphon pisum (strain Tuc7).